Reading from the N-terminus, the 664-residue chain is Ubiquinol oxidase subunit 1 (664 aa).

Helical transmembrane passes span 15–35 (PILV…LGLI) and 57–77 (LAAM…ADAI). His-106 contacts heme b. Helical transmembrane passes span 109-129 (IMIF…IVPL), 136-156 (VAFP…FILV), 190-210 (YIWA…NFFV), 233-253 (LCAS…VGLL), 278-298 (LIWA…FGVF), 316-336 (MVYA…HHFF), 347-367 (FFGI…FNWL), 383-403 (WAVG…MLAI), 414-434 (LFLI…GYIC), 456-476 (AFWF…IVGF), 490-510 (AWHP…LGIA), and 603-623 (ALIF…VGLV). Positions 284, 288, 333, and 334 each coordinate Cu cation. A cross-link (1'-histidyl-3'-tyrosine (His-Tyr)) is located at residues 284 to 288 (HPEVY). Position 419 (His-419) interacts with Fe(II)-heme a. His-421 is a heme b binding site.

This sequence belongs to the heme-copper respiratory oxidase family. As to quaternary structure, heterotetramer of the subunits 1, 2, 3 and 4.

It is found in the cell membrane. Catalytic subunit of the enzyme. Electrons originating in a quinol are transferred to the bimetallic center formed by heme a and copper B. This is Ubiquinol oxidase subunit 1 (cyaA) from Acetobacter aceti.